A 431-amino-acid chain; its full sequence is Enolase (431 aa).

Residue glutamine 167 coordinates (2R)-2-phosphoglycerate. The active-site Proton donor is glutamate 209. Mg(2+) contacts are provided by aspartate 246, glutamate 289, and aspartate 316. Positions 341, 370, 371, and 392 each coordinate (2R)-2-phosphoglycerate. The active-site Proton acceptor is lysine 341.

It belongs to the enolase family. As to quaternary structure, component of the RNA degradosome, a multiprotein complex involved in RNA processing and mRNA degradation. The cofactor is Mg(2+).

The protein localises to the cytoplasm. The protein resides in the secreted. It is found in the cell surface. The catalysed reaction is (2R)-2-phosphoglycerate = phosphoenolpyruvate + H2O. The protein operates within carbohydrate degradation; glycolysis; pyruvate from D-glyceraldehyde 3-phosphate: step 4/5. Its function is as follows. Catalyzes the reversible conversion of 2-phosphoglycerate (2-PG) into phosphoenolpyruvate (PEP). It is essential for the degradation of carbohydrates via glycolysis. The polypeptide is Enolase (Shewanella baltica (strain OS155 / ATCC BAA-1091)).